The sequence spans 95 residues: MSVTIKDVAYIAELARLSFTDTEKEKMTSELNAILQYVEKLDEVDTDGVEPLSSIHDEVNVLRDDVRQESVPNETALLNAPDKLDRFFRVPKVIG.

It belongs to the GatC family. In terms of assembly, heterotrimer of A, B and C subunits.

It carries out the reaction L-glutamyl-tRNA(Gln) + L-glutamine + ATP + H2O = L-glutaminyl-tRNA(Gln) + L-glutamate + ADP + phosphate + H(+). The catalysed reaction is L-aspartyl-tRNA(Asn) + L-glutamine + ATP + H2O = L-asparaginyl-tRNA(Asn) + L-glutamate + ADP + phosphate + 2 H(+). In terms of biological role, allows the formation of correctly charged Asn-tRNA(Asn) or Gln-tRNA(Gln) through the transamidation of misacylated Asp-tRNA(Asn) or Glu-tRNA(Gln) in organisms which lack either or both of asparaginyl-tRNA or glutaminyl-tRNA synthetases. The reaction takes place in the presence of glutamine and ATP through an activated phospho-Asp-tRNA(Asn) or phospho-Glu-tRNA(Gln). This chain is Aspartyl/glutamyl-tRNA(Asn/Gln) amidotransferase subunit C, found in Chlorobium phaeobacteroides (strain BS1).